The following is a 449-amino-acid chain: Uric acid permease PucJ (449 aa).

Helical transmembrane passes span 11–31 (LSLQ…LLVG), 41–61 (LSYL…LQTL), 67–87 (GIGL…MIAI), 91–111 (YGIH…FLFA), 119–139 (VLFP…SLVP), 158–178 (EYGS…ILVL), 191–211 (VLIG…VSFS), 229–249 (APAF…VIIV), 277–297 (AEGI…NTFA), 313–333 (IVVT…IAAL), 334–354 (ASAV…GMVI), 372–392 (LLTI…PGIF), and 401–421 (ILVS…NLFF).

The protein belongs to the nucleobase:cation symporter-2 (NCS2) (TC 2.A.40) family.

The protein localises to the cell membrane. Functionally, uptake of uric acid. The sequence is that of Uric acid permease PucJ (pucJ) from Bacillus subtilis (strain 168).